A 681-amino-acid chain; its full sequence is Transcriptional regulator prz1 (681 aa).

Over residues 1 to 15 (MERQRSEEANRRFKD) the composition is skewed to basic and acidic residues. 5 disordered regions span residues 1–29 (MERQ…SKPD), 66–96 (NPSK…DSYP), 340–372 (SHQS…NSPF), 410–433 (PQIN…ANPL), and 520–563 (KIEN…AKSE). 2 stretches are compositionally biased toward polar residues: residues 66–86 (NPSK…FKTS) and 340–358 (SHQS…LNSE). Over residues 416-428 (PSSPSKSQSGPSL) the composition is skewed to low complexity. A compositionally biased stretch (polar residues) spans 528-549 (SNDYLSVRNTRPRSRSLNSLVG). Ser543 and Ser546 each carry phosphoserine. A compositionally biased stretch (low complexity) spans 550-559 (NKSENSSSSK). C2H2-type zinc fingers lie at residues 570–594 (YVCT…MNTH) and 600–622 (FQCS…EQLH). The C2H2-type 3; degenerate zinc-finger motif lies at 628-650 (FACVTCNQRFARMDALNRHYKSE). The segment at 662–681 (RGIQVPPSRKTAVASTSKQK) is disordered.

This sequence belongs to the EGR C2H2-type zinc-finger protein family. In terms of processing, phosphorylated. Dephosphorylated by calcineurin which leads to rapid translocation from the cytoplasm to the nucleus.

Its subcellular location is the nucleus. It is found in the cytoplasm. In terms of biological role, involved in the regulation of calcium ion homeostasis. Binds to the calcineurin-dependent response element. Transcriptionally regulates pmc1. The protein is Transcriptional regulator prz1 (prz1) of Schizosaccharomyces pombe (strain 972 / ATCC 24843) (Fission yeast).